We begin with the raw amino-acid sequence, 119 residues long: Defensin-like protein 260 (119 aa).

Residues 1-24 form the signal peptide; sequence MKIASLKLLLLVSLLFAVTQNGIS. Cystine bridges form between C44–C99, C63–C79, C69–C83, and C73–C85.

The protein belongs to the DEFL family.

Its subcellular location is the secreted. The sequence is that of Defensin-like protein 260 from Arabidopsis thaliana (Mouse-ear cress).